The chain runs to 1683 residues: MDVNSRLSVQSNVESPLMPEDSEPQQITSSAAGSLAGSITACKKVLRSNSLLESTDYWLQNQRTPCQIGFVEDESENCASVCFVNLDVNKDGCSTENLQQKLVNVSPDLPKLINSMNVQKPKENEIVLLSGLASGNRQADFDVSQCPWLPDICLVQCARGNRPNSTNCIIFEINKFLIGLEVVQERQLHLETSVLKLEDDTNCSLSSIEEDFLTASEHLEEEIEVEDCKSGLETINVSANVLESKRPKEATQEGWDYHKEILHCALGEKHIRKHRMPSMKTERSKENTAENTALQSLNPSARPSRLKSEVAGSKQPATNYSYPENIRGEIETSQMLFIPRDAYLSMVSSCGVLTEQGSNHRDHDATPNSLPPVQNGEATAGEYATNLAESVMQDAFIRLSQSQPTLPQESAVSFSVGSALLPSGCCTKDMVVPRSWNELPKIVIVQSPEGSDTAPEPSVSSWPDLEVSVETPGIFSEESSSRPTQSALEVALACAATVIGTTSSPQATERFTMEQESLVSTYTQRGNGIQQTPVPRVFMGPSTTEYSFPSALCGMTQVASAVAVCGLGEREEVTYSVAPSDLLPTPGASEERSSIGSLVTEESTELGKEAIAEALLREATLVLARPNAYSSVGELLESVNRRIIETTSKTQMLCTENVRRNELAHTLSNVILKHSIDELHQKNIMAHPTEERHPGGTLNTLMESVNQLLHNVMCFTFRKMNHIVTLGEHPSFDKAAGHAWVKASACSSSHPSSNAHGTGLVIRDLVEDASPKPDKGGARPELVNNPRLQSEFSCSHRMLDSTARTFPKEMYPKGIVGEDTRNPLHTLSYDSSEQRTSTDIGKLTTVGEVRSTFQESEDSIVPKAQEKHTCATTLNNEAQINLSLLGDDLVVPDQSTLEAKQSEVYGITNFAEELAETVVSMATEIAAICLDNSHGKQPWFCAWKRGNEFLMTPNASCRSLKRKKENSGTGSTVRKHKPPRLSEIKRKADEHPELKEKLMNRVMDESMNLEDIPDSVSTFANEVAAKIMNLTEFSTVDGVWQTQSCSRNRLLGGDRWNRLKASSCESIPEEDSEARVFVNSLGLMSTLSQPVSRASSVSKQSSCESITDEFSRFMVKQMENEGRGFELLLDYYAGKNASSILNSAIQQACQKNDHLNVRPSCPSKQSSTESITEEFYKYMLRDIAKENKDGALSRRSSHDWSTGLLSPSARSPLCYRQSSMPDSRSPCSRLTVNAPIKANSLDGFAQNCPQDSINVQPVSRASSSGLCKSDSCLYRRSGTDQITNMLIHETWASSIEALMRKNKIIADDGEAANASPGPVSGGSPSQVEKCANRLVTGTGHKGPALLVQESVDYQRKDAVTEGNCSPVSSPSKMAPVKKPSGFDPTRETSACHNAVALKSPRRSLCSREVPLIQIETDQKEECVGESETLLPQSGSLEEAEGPQPEETIPDVARSEDTALSACQSSQDSLETREELEVDVLKEDITLDESRNPPSSSEESTGSWSQLANEEDNPDDTSSFLQLSERSMSNGNTSGTSSLGIMDLDIYQESIPSSPMINELVEEKEILKEQSESVKERASGLPGRAASPQRSLLVINFDLEPECPDAELRATLQWIAASELGIPTIYFKKSQESRIEKFLDVVKLVHQKSWKVGDIFHAVVQYCKMHAEQKEGTPSLFDWLLELG.

2 stretches are compositionally biased toward polar residues: residues 1 to 14 (MDVN…SNVE) and 289 to 301 (AENT…NPSA). 3 disordered regions span residues 1 to 30 (MDVN…ITSS), 275 to 320 (RMPS…ATNY), and 582 to 601 (LLPT…LVTE). Residues 910–927 (FAEELAETVVSMATEIAA) are PKA-RII subunit binding domain. The disordered stretch occupies residues 960 to 983 (LKRKKENSGTGSTVRKHKPPRLSE). A phosphoserine mark is found at Ser1006, Ser1066, Ser1088, Ser1101, Ser1102, Ser1105, Ser1240, and Ser1269. Disordered stretches follow at residues 1359-1387 (VTEG…PTRE) and 1415-1518 (ETDQ…DTSS). Over residues 1362 to 1371 (GNCSPVSSPS) the composition is skewed to polar residues. Residues 1469–1490 (LETREELEVDVLKEDITLDESR) are compositionally biased toward basic and acidic residues. The span at 1492-1504 (PPSSSEESTGSWS) shows a compositional bias: low complexity.

The protein belongs to the AKAP110 family. As to quaternary structure, interacts (via the PKA-RII subunit binding domain) with the RI subunit of PKA. Interacts with SPHK1; the interaction greatly reduces SPHK1 activity. In terms of tissue distribution, abundant in heart ventricle (at protein level).

The protein localises to the cytoplasm. Functionally, anchoring protein that binds preferentially to the type I regulatory subunit of c-AMP-dependent protein kinase (PKA type I) and targets it to distinct subcellular compartments. May act as a converging factor linking cAMP and sphingosine signaling pathways. Plays a regulatory role in the modulation of SPHK1. The chain is A-kinase anchor protein SPHKAP (Sphkap) from Rattus norvegicus (Rat).